Here is an 86-residue protein sequence, read N- to C-terminus: uncharacterized protein (86 aa).

This is an uncharacterized protein from Helicobacter pylori (strain J99 / ATCC 700824) (Campylobacter pylori J99).